An 85-amino-acid chain; its full sequence is U4-theraphotoxin-Hhn1q (85 aa).

The signal sequence occupies residues 1-22 (MKVTLIAILTCAAVLVLHTTAA). The propeptide occupies 23 to 48 (EELEAESQLMEVGMPDTELAAVDEER). 3 disulfide bridges follow: C52/C66, C56/C77, and C71/C82.

This sequence belongs to the neurotoxin 12 (Hwtx-2) family. 02 (Hwtx-2) subfamily. In terms of tissue distribution, expressed by the venom gland.

Its subcellular location is the secreted. Its function is as follows. Postsynaptic neurotoxin. The sequence is that of U4-theraphotoxin-Hhn1q from Cyriopagopus hainanus (Chinese bird spider).